A 645-amino-acid chain; its full sequence is 1,4-alpha-glucan branching enzyme GlgB (645 aa).

The active-site Nucleophile is the D309. E352 serves as the catalytic Proton donor. The tract at residues 619-645 is disordered; sequence VKTRKGSKKQDGSKTKVRSNVTSRGKR. Residues 636–645 are compositionally biased toward polar residues; sequence RSNVTSRGKR.

The protein belongs to the glycosyl hydrolase 13 family. GlgB subfamily. As to quaternary structure, monomer.

The catalysed reaction is Transfers a segment of a (1-&gt;4)-alpha-D-glucan chain to a primary hydroxy group in a similar glucan chain.. The protein operates within glycan biosynthesis; glycogen biosynthesis. Catalyzes the formation of the alpha-1,6-glucosidic linkages in glycogen by scission of a 1,4-alpha-linked oligosaccharide from growing alpha-1,4-glucan chains and the subsequent attachment of the oligosaccharide to the alpha-1,6 position. This is 1,4-alpha-glucan branching enzyme GlgB from Bacillus mycoides (strain KBAB4) (Bacillus weihenstephanensis).